The sequence spans 571 residues: Protein E6 homolog (571 aa).

Belongs to the chordopoxvirinae E6 family.

It localises to the virion. Functionally, late protein which may play a role in the virion morphogenesis and have therefore an indirect role on viral transcription ability. This is Protein E6 homolog from Vertebrata (FPV).